Consider the following 223-residue polypeptide: Deoxyribose-phosphate aldolase (223 aa).

Asp-92 (proton donor/acceptor) is an active-site residue. Lys-154 (schiff-base intermediate with acetaldehyde) is an active-site residue. Lys-182 serves as the catalytic Proton donor/acceptor.

It belongs to the DeoC/FbaB aldolase family. DeoC type 1 subfamily.

It localises to the cytoplasm. It carries out the reaction 2-deoxy-D-ribose 5-phosphate = D-glyceraldehyde 3-phosphate + acetaldehyde. Its pathway is carbohydrate degradation; 2-deoxy-D-ribose 1-phosphate degradation; D-glyceraldehyde 3-phosphate and acetaldehyde from 2-deoxy-alpha-D-ribose 1-phosphate: step 2/2. Its function is as follows. Catalyzes a reversible aldol reaction between acetaldehyde and D-glyceraldehyde 3-phosphate to generate 2-deoxy-D-ribose 5-phosphate. This Pasteurella multocida (strain Pm70) protein is Deoxyribose-phosphate aldolase.